Here is a 514-residue protein sequence, read N- to C-terminus: 2,3-bisphosphoglycerate-independent phosphoglycerate mutase (514 aa).

Mn(2+)-binding residues include aspartate 13 and serine 69. Serine 69 serves as the catalytic Phosphoserine intermediate. Substrate is bound by residues histidine 128, 158–159, arginine 189, arginine 195, 263–266, and lysine 336; these read RD and RADR. Residues aspartate 402, histidine 406, aspartate 443, histidine 444, and histidine 461 each coordinate Mn(2+).

Belongs to the BPG-independent phosphoglycerate mutase family. As to quaternary structure, monomer. Requires Mn(2+) as cofactor.

The enzyme catalyses (2R)-2-phosphoglycerate = (2R)-3-phosphoglycerate. It functions in the pathway carbohydrate degradation; glycolysis; pyruvate from D-glyceraldehyde 3-phosphate: step 3/5. In terms of biological role, catalyzes the interconversion of 2-phosphoglycerate and 3-phosphoglycerate. The chain is 2,3-bisphosphoglycerate-independent phosphoglycerate mutase from Akkermansia muciniphila (strain ATCC BAA-835 / DSM 22959 / JCM 33894 / BCRC 81048 / CCUG 64013 / CIP 107961 / Muc).